Consider the following 439-residue polypeptide: Tol-Pal system protein TolB (439 aa).

Residues 1 to 22 (MKKPLRWLAALTVLLLPLSALA) form the signal peptide.

The protein belongs to the TolB family. The Tol-Pal system is composed of five core proteins: the inner membrane proteins TolA, TolQ and TolR, the periplasmic protein TolB and the outer membrane protein Pal. They form a network linking the inner and outer membranes and the peptidoglycan layer.

It is found in the periplasm. Functionally, part of the Tol-Pal system, which plays a role in outer membrane invagination during cell division and is important for maintaining outer membrane integrity. The protein is Tol-Pal system protein TolB of Xanthomonas oryzae pv. oryzae (strain KACC10331 / KXO85).